The chain runs to 681 residues: 2-(S-pantetheinyl)-carbapenam-3-carboxylate methyltransferase (681 aa).

One can recognise a B12-binding domain in the interval 1–144 (MTVPAARSGR…IERLADHPDY (144 aa)). Residues N18, S72, Y74, V75, H103, G126, and E127 each contribute to the cob(II)alamin site. Residues 192 to 417 (RDLRFYALWE…RLYVEEPGTP (226 aa)) form the Radical SAM core domain. [4Fe-4S] cluster contacts are provided by C206 and C210. F212 provides a ligand contact to 5'-deoxyadenosine. Residue C213 coordinates [4Fe-4S] cluster. Cob(II)alamin-binding residues include D214 and C249. 5'-deoxyadenosine is bound by residues Q312, E349, and G384.

The protein belongs to the methyltransferase superfamily. It depends on [4Fe-4S] cluster as a cofactor. Requires cob(II)alamin as cofactor.

It carries out the reaction (2R,3R,5S)-2-(S-pantetheinyl)-carbapenam-3-carboxylate + AH2 + 2 S-adenosyl-L-methionine = (2R,3R,5S,6R)-6-(methyl)-2-(S-pantetheinyl)-carbapenam-3-carboxylate + 5'-deoxyadenosine + L-methionine + A + S-adenosyl-L-homocysteine + 2 H(+). It catalyses the reaction (2R,3R,5S,6R)-6-(methyl)-2-(S-pantetheinyl)-carbapenam-3-carboxylate + AH2 + 2 S-adenosyl-L-methionine = (2R,3R,5S,6R)-6-(ethyl)-2-(S-pantetheinyl)-carbapenam-3-carboxylate + 5'-deoxyadenosine + L-methionine + A + S-adenosyl-L-homocysteine + 2 H(+). It participates in antibiotic biosynthesis. Functionally, methyltransferase involved in the biosynthesis of the beta-lactam carbapenem antibiotic thienamycin. Catalyzes two consecutive S-adenosyl-L-methionine-dependent methylations to build out the C6-ethyl side chain in a stereocontrolled manner. In vitro can use methyl viologen and NADPH as the iron-sulfur cluster reductants. The chain is 2-(S-pantetheinyl)-carbapenam-3-carboxylate methyltransferase from Streptantibioticus cattleyicolor (strain ATCC 35852 / DSM 46488 / JCM 4925 / NBRC 14057 / NRRL 8057) (Streptomyces cattleya).